The primary structure comprises 204 residues: Abscisic acid receptor PYL3 (204 aa).

The START-like stretch occupies residues 40 to 191 (HEPRDHQCSS…NLKSLAEVSE (152 aa)). An intrachain disulfide couples C47 to C172. Residues K76, 104–109 (ATRSTE), 131–137 (RLKNYSS), and E156 contribute to the abscisate site. A Gate loop motif is present at residues 100-104 (SGLPA). The short motif at 130–132 (HRL) is the Latch loop element.

This sequence belongs to the PYR/PYL/RCAR abscisic acid intracellular receptor family. As to quaternary structure, monomer. Interacts with PP2C50. Binding to PP2C50 is dependent on the presence of abscisic acid (ABA). Interacts with PP2C30 and PP2C53.

The protein localises to the cytoplasm. It is found in the cytosol. Its subcellular location is the nucleus. Functionally, involved in abscisic acid (ABA) signaling during seed germination and abiotic stress response. Acts as a positive regulator of ABA-mediated inhibition of seed germination, and tolerance to drought and cold stresses. Together with PP2C50 and SAPK10, may form an ABA signaling module involved in stress response. Inhibits the protein phosphatases PP2C06 and PP2C09 when activated by abscisic acid (ABA). This is Abscisic acid receptor PYL3 from Oryza sativa subsp. japonica (Rice).